A 190-amino-acid polypeptide reads, in one-letter code: E3 ubiquitin-protein ligase RNF4 (190 aa).

The required for ubiquitination activity stretch occupies residues 1-16; the sequence is MSTRKRRGGAINSRQA. The disordered stretch occupies residues 1 to 29; it reads MSTRKRRGGAINSRQAQKRTREATSTPEI. The tract at residues 4-61 is mediates interaction with TRPS1; it reads RKRRGGAINSRQAQKRTREATSTPEISLEAEPIELVETAGDEIVDLTCESLEPVVVDL. 4 consecutive short sequence motifs (SUMO interaction motif) follow at residues 36 to 39, 46 to 49, 57 to 59, and 67 to 70; these read IELV, IVDL, VVV, and VVIV. Ser-94 and Ser-95 each carry phosphoserine. Residues Cys-132, Cys-135, Cys-154, His-156, Cys-159, Cys-162, Cys-173, and Cys-176 each contribute to the Zn(2+) site. The RING-type zinc-finger motif lies at 132-177; the sequence is CPICMDGYSEIVQNGRLIVSTECGHVFCSQCLRDSLKNANTCPTCR.

As to quaternary structure, homodimer (via RING-type zinc finger domain). Interacts with GSC2. Interacts with AR/the androgen receptor and TBP. Interacts with TCF20. Interacts with PATZ1. Interacts with TRPS1; negatively regulates TRPS1 transcriptional repressor activity. Interacts with PML (isoform PML-1, isoform PML-2, isoform PML-3, isoform PML-4, isoform PML-5 and isoform PML-6). Interacts with PRDM1/Blimp-1. In terms of processing, sumoylated; conjugated by one or two SUMO1 moieties. Autoubiquitinated. In terms of tissue distribution, widely expressed at low levels in many tissues; highly expressed in testis.

It localises to the cytoplasm. The protein localises to the nucleus. It is found in the PML body. It catalyses the reaction S-ubiquitinyl-[E2 ubiquitin-conjugating enzyme]-L-cysteine + [acceptor protein]-L-lysine = [E2 ubiquitin-conjugating enzyme]-L-cysteine + N(6)-ubiquitinyl-[acceptor protein]-L-lysine.. It functions in the pathway protein modification; protein ubiquitination. Functionally, E3 ubiquitin-protein ligase which binds polysumoylated chains covalently attached to proteins and mediates 'Lys-6'-, 'Lys-11'-, 'Lys-48'- and 'Lys-63'-linked polyubiquitination of those substrates and their subsequent targeting to the proteasome for degradation. Regulates the degradation of several proteins including PML and the transcriptional activator PEA3. Involved in chromosome alignment and spindle assembly, it regulates the kinetochore CENPH-CENPI-CENPK complex by targeting polysumoylated CENPI to proteasomal degradation. Regulates the cellular responses to hypoxia and heat shock through degradation of respectively EPAS1 and PARP1. Alternatively, it may also bind DNA/nucleosomes and have a more direct role in the regulation of transcription for instance enhancing basal transcription and steroid receptor-mediated transcriptional activation. Catalyzes ubiquitination of sumoylated PARP1 in response to PARP1 trapping to chromatin, leading to PARP1 removal from chromatin by VCP/p97. This Homo sapiens (Human) protein is E3 ubiquitin-protein ligase RNF4.